The sequence spans 181 residues: Putative J domain-containing protein R266 (181 aa).

One can recognise a J domain in the interval 6-70 (NYYQILDVDN…LKRLNYDSYL (65 aa)).

This is Putative J domain-containing protein R266 from Acanthamoeba polyphaga (Amoeba).